We begin with the raw amino-acid sequence, 779 residues long: MMEDNKQLALRIDGAVQSASQEVTNLRAELTATNRRLAELSGGGGGPGSGPGAATSASAAAVTVADSAVATMENHQHGAQVLLREEVVQLQEEVHLLRQMKEMLAKDLEESQGGKCSEVLSATELRVQLVQKEQELARAKEALQAMKADRKRLKGEKTDLVSQMQQLYATLESREEQLRDFIRNYEQHRKESEDAVKALAKEKDLLEREKWELRRQAKEATDHAAALRSQLDLKDNRMKELEAELAMAKQSLATLTKDVPKRHSLAMPGETVLNGNQEWVVQADLPLTAAIRQSQQTLYHSHPPHPADRQVRVSPCHSRQPSVISDASAAEGDRSSTPSDINSPRHRTHSLCNGDSPGPVQKSLHNPIVQSLEDLEDQKRKKKKEKMGFGSISRVFARGKQRKSLDPGLFDDSDSQCSPTRHSLSLSEGEEQMDRLQHVELVRTTPMSHWKAGTVQAWLEVVMAMPMYVKACAENVKSGKVLLSLSDEDLELGLGVCSSLHRRKLRLAIEDYRDAEAGRSLSKAADLDHHWVAKAWLNDIGLSQYSQAFQNHLVDGRMLNSLMKRDLEKHLNVSKKFHQVSILLGIELLYQVNFSREALQERRARCETQNTDPVVWTNQRVLKWVRDIDLKEYADNLTNSGVHGAVLVLEPTFNAEAMATALGIPSGKHILRRHLAEEMSTIFHPSNSTGIRESERFGTPPGRASSITRAGREDSGGNSKHRAGRLPLGKIGRGFSSKEPDFHDDYGSLENEDCGDEDLQGRPEQCRLEGYGSLEVTNV.

Residues 79–261 (AQVLLREEVV…LATLTKDVPK (183 aa)) are a coiled coil. Residues 295–366 (QQTLYHSHPP…PGPVQKSLHN (72 aa)) form a disordered region. 3 positions are modified to phosphoserine: Ser356, Ser371, and Ser391. Residues 403-429 (KSLDPGLFDDSDSQCSPTRHSLSLSEG) are disordered. Residues 415–426 (SQCSPTRHSLSL) are compositionally biased toward polar residues. 3 SAM domains span residues 450–515 (WKAG…YRDA), 528–592 (DHHW…LYQV), and 616–683 (WTNQ…STIF). The segment at 685–779 (PSNSTGIRES…GYGSLEVTNV (95 aa)) is disordered. The span at 736–746 (SSKEPDFHDDY) shows a compositional bias: basic and acidic residues.

The protein belongs to the kazrin family. As to expression, expressed in skin interfollicular epidermis and hair follicles. Expressed in tongue epithelium basal suprabasal layers.

Its subcellular location is the cell junction. The protein resides in the nucleus. It localises to the cytoplasm. It is found in the cytoskeleton. Its function is as follows. Component of the cornified envelope of keratinocytes. May be involved in the interplay between adherens junctions and desmosomes. The function in the nucleus is not known. The chain is Kazrin (Kazn) from Mus musculus (Mouse).